The sequence spans 423 residues: UPF0229 protein Pmen_4018 (423 aa).

The disordered stretch occupies residues 65–108; the sequence is HHGRGGKQTIVHPGNKEFTAGERIPRPQGGGGGRGSGKASNSGE.

Belongs to the UPF0229 family.

This Ectopseudomonas mendocina (strain ymp) (Pseudomonas mendocina) protein is UPF0229 protein Pmen_4018.